The sequence spans 170 residues: RNA pyrophosphohydrolase (170 aa).

Positions 8–151 (PYRPNVGIAL…KKALYAELIP (144 aa)) constitute a Nudix hydrolase domain. The Nudix box motif lies at 42 to 63 (GGIDEGETPQVAALREMGEEIG).

This sequence belongs to the Nudix hydrolase family. RppH subfamily. The cofactor is a divalent metal cation.

Functionally, accelerates the degradation of transcripts by removing pyrophosphate from the 5'-end of triphosphorylated RNA, leading to a more labile monophosphorylated state that can stimulate subsequent ribonuclease cleavage. The sequence is that of RNA pyrophosphohydrolase from Gluconobacter oxydans (strain 621H) (Gluconobacter suboxydans).